The primary structure comprises 142 residues: Large ribosomal subunit protein uL13 (142 aa).

Belongs to the universal ribosomal protein uL13 family. In terms of assembly, part of the 50S ribosomal subunit.

Its function is as follows. This protein is one of the early assembly proteins of the 50S ribosomal subunit, although it is not seen to bind rRNA by itself. It is important during the early stages of 50S assembly. The protein is Large ribosomal subunit protein uL13 of Shigella sonnei (strain Ss046).